A 461-amino-acid chain; its full sequence is Mannan endo-1,4-beta-mannosidase 4 (461 aa).

Substrate is bound by residues Trp80 and Asn195. Catalysis depends on Glu196, which acts as the Proton donor. Substrate is bound at residue Tyr274. The active-site Nucleophile is Glu314. Substrate is bound by residues Trp357 and Asp364.

It belongs to the glycosyl hydrolase 5 (cellulase A) family. Ubiquitous.

The catalysed reaction is Random hydrolysis of (1-&gt;4)-beta-D-mannosidic linkages in mannans, galactomannans and glucomannans.. The polypeptide is Mannan endo-1,4-beta-mannosidase 4 (MAN4) (Oryza sativa subsp. japonica (Rice)).